The following is a 304-amino-acid chain: Acetaldehyde dehydrogenase 1 (304 aa).

Cys-131 functions as the Acyl-thioester intermediate in the catalytic mechanism. NAD(+) is bound by residues Ser-162–Asn-170 and Asn-273.

It belongs to the acetaldehyde dehydrogenase family.

The enzyme catalyses acetaldehyde + NAD(+) + CoA = acetyl-CoA + NADH + H(+). This Dechloromonas aromatica (strain RCB) protein is Acetaldehyde dehydrogenase 1.